The primary structure comprises 105 residues: Large ribosomal subunit protein bL21 (105 aa).

It belongs to the bacterial ribosomal protein bL21 family. In terms of assembly, part of the 50S ribosomal subunit. Contacts protein L20.

Functionally, this protein binds to 23S rRNA in the presence of protein L20. This is Large ribosomal subunit protein bL21 from Rhizobium rhizogenes (strain K84 / ATCC BAA-868) (Agrobacterium radiobacter).